Consider the following 207-residue polypeptide: Superoxide dismutase [Mn] (207 aa).

Mn(2+)-binding residues include H28, H76, D160, and H164.

Belongs to the iron/manganese superoxide dismutase family. Requires Mn(2+) as cofactor.

The enzyme catalyses 2 superoxide + 2 H(+) = H2O2 + O2. Its function is as follows. Destroys superoxide anion radicals which are normally produced within the cells and which are toxic to biological systems. This Mycolicibacterium fortuitum (Mycobacterium fortuitum) protein is Superoxide dismutase [Mn] (sodA).